The chain runs to 170 residues: Shikimate kinase (170 aa).

Residue 11-16 participates in ATP binding; that stretch reads LSGKST. Ser15 contributes to the Mg(2+) binding site. Residues Asp33, Arg57, and Gly79 each coordinate substrate. Residue Arg119 coordinates ATP. Arg137 provides a ligand contact to substrate.

This sequence belongs to the shikimate kinase family. As to quaternary structure, monomer. The cofactor is Mg(2+).

Its subcellular location is the cytoplasm. The enzyme catalyses shikimate + ATP = 3-phosphoshikimate + ADP + H(+). The protein operates within metabolic intermediate biosynthesis; chorismate biosynthesis; chorismate from D-erythrose 4-phosphate and phosphoenolpyruvate: step 5/7. In terms of biological role, catalyzes the specific phosphorylation of the 3-hydroxyl group of shikimic acid using ATP as a cosubstrate. The sequence is that of Shikimate kinase from Clostridium botulinum (strain Langeland / NCTC 10281 / Type F).